Here is a 100-residue protein sequence, read N- to C-terminus: Aspartyl/glutamyl-tRNA(Asn/Gln) amidotransferase subunit C (100 aa).

The protein belongs to the GatC family. In terms of assembly, heterotrimer of A, B and C subunits.

It catalyses the reaction L-glutamyl-tRNA(Gln) + L-glutamine + ATP + H2O = L-glutaminyl-tRNA(Gln) + L-glutamate + ADP + phosphate + H(+). The enzyme catalyses L-aspartyl-tRNA(Asn) + L-glutamine + ATP + H2O = L-asparaginyl-tRNA(Asn) + L-glutamate + ADP + phosphate + 2 H(+). In terms of biological role, allows the formation of correctly charged Asn-tRNA(Asn) or Gln-tRNA(Gln) through the transamidation of misacylated Asp-tRNA(Asn) or Glu-tRNA(Gln) in organisms which lack either or both of asparaginyl-tRNA or glutaminyl-tRNA synthetases. The reaction takes place in the presence of glutamine and ATP through an activated phospho-Asp-tRNA(Asn) or phospho-Glu-tRNA(Gln). This chain is Aspartyl/glutamyl-tRNA(Asn/Gln) amidotransferase subunit C, found in Streptococcus agalactiae serotype Ia (strain ATCC 27591 / A909 / CDC SS700).